We begin with the raw amino-acid sequence, 518 residues long: GMP synthase [glutamine-hydrolyzing] (518 aa).

Positions 6–200 constitute a Glutamine amidotransferase type-1 domain; the sequence is RLLIIDFGSQ…FVRLAGFKGD (195 aa). Catalysis depends on cysteine 84, which acts as the Nucleophile. Residues histidine 175 and glutamate 177 contribute to the active site. One can recognise a GMPS ATP-PPase domain in the interval 201–393; that stretch reads WTMGAYREEA…LGLPESFIGR (193 aa). 228–234 is a binding site for ATP; the sequence is SGGVDSS.

Homodimer.

It catalyses the reaction XMP + L-glutamine + ATP + H2O = GMP + L-glutamate + AMP + diphosphate + 2 H(+). It functions in the pathway purine metabolism; GMP biosynthesis; GMP from XMP (L-Gln route): step 1/1. Its function is as follows. Catalyzes the synthesis of GMP from XMP. The protein is GMP synthase [glutamine-hydrolyzing] of Cereibacter sphaeroides (strain ATCC 17023 / DSM 158 / JCM 6121 / CCUG 31486 / LMG 2827 / NBRC 12203 / NCIMB 8253 / ATH 2.4.1.) (Rhodobacter sphaeroides).